The following is a 709-amino-acid chain: PP2C-like domain-containing protein CG9801 (709 aa).

3 disordered regions span residues 121–222 (DCYG…NSER), 503–530 (LHPS…SRPK), and 678–709 (GGGE…ETNF). Residues 130–143 (PPVQVATQNSTRLT) are compositionally biased toward polar residues. Low complexity predominate over residues 182–196 (ANLAAASAGTDAGKA). Over residues 197-217 (NSDQNNRNVLNAKTEVSTDGD) the composition is skewed to polar residues. The 245-residue stretch at 259–503 (SVSLYETNML…KSASAIYARL (245 aa)) folds into the PPM-type phosphatase domain.

In Drosophila melanogaster (Fruit fly), this protein is PP2C-like domain-containing protein CG9801.